Here is a 336-residue protein sequence, read N- to C-terminus: Solute-binding protein Csal_2479 (336 aa).

The signal sequence occupies residues 1–33 (MQTNKRLKMASCVKAAAMLGMLLSVSISTTAQA). Beta-D-glucuronate contacts are provided by residues histidine 42, glutamine 80, arginine 156, arginine 177, tyrosine 200, 217–218 (NN), and glutamate 244.

The protein belongs to the bacterial solute-binding protein 7 family. The complex is comprised of an extracytoplasmic solute-binding protein and a heteromeric permease formed by two transmembrane proteins.

It localises to the periplasm. Solute-binding protein that binds D-glucuronate (in vitro). Probably part of a tripartite ATP-independent periplasmic (TRAP) transport system that mediates solute transport into the cytoplasm. The sequence is that of Solute-binding protein Csal_2479 from Chromohalobacter salexigens (strain ATCC BAA-138 / DSM 3043 / CIP 106854 / NCIMB 13768 / 1H11).